Reading from the N-terminus, the 368-residue chain is DNA replication and repair protein RecF (368 aa).

Residue Gly-30–Thr-37 participates in ATP binding.

This sequence belongs to the RecF family.

It localises to the cytoplasm. Its function is as follows. The RecF protein is involved in DNA metabolism; it is required for DNA replication and normal SOS inducibility. RecF binds preferentially to single-stranded, linear DNA. It also seems to bind ATP. The sequence is that of DNA replication and repair protein RecF from Chlorobaculum parvum (strain DSM 263 / NCIMB 8327) (Chlorobium vibrioforme subsp. thiosulfatophilum).